The sequence spans 266 residues: Putative carbamate hydrolase RutD (266 aa).

This sequence belongs to the AB hydrolase superfamily. Hydrolase RutD family.

The catalysed reaction is carbamate + 2 H(+) = NH4(+) + CO2. In terms of biological role, involved in pyrimidine catabolism. May facilitate the hydrolysis of carbamate, a reaction that can also occur spontaneously. This is Putative carbamate hydrolase RutD from Enterobacter cloacae subsp. cloacae (strain ATCC 13047 / DSM 30054 / NBRC 13535 / NCTC 10005 / WDCM 00083 / NCDC 279-56).